A 421-amino-acid chain; its full sequence is MYKKISMNDKEIEHAINNEVDRQNEHIELIASENYVSEDVLTAVGSVLTNKYGEGYPGKRYYGGCENVDVVETLAIERLKKLFGVKFANVQPYSGSVANAAALATLASQGDKIMGLDLASGGHLTHGYKISFSGIFYNSITYSVNEDGILDYEAIKELAIKEKPKVIICGYSAYSRIVDFKKFREIADACGAKLMADIAHIAGLIAGGVHPSPVPYADIITSTTHKTLRGARGAIIMTNDVEIAKKMNRWVFPGYQGGPLFHAIAGKAVAFGEALKPEYAAYAKSVVYNAREFSNYFIKQGVSIVSGGTDNHLFTINVNKSYGISGLQAEKILGKFNITVNKNTVPFDELSPAVTSGIRIGTAAMSSRKFAKWKELGAIMHEILQNCVEFSENESKHLDRIAELKKQVEALTTEFPIITKY.

Residues Leu118 and 122–124 contribute to the (6S)-5,6,7,8-tetrahydrofolate site; that span reads GHL. Lys226 is modified (N6-(pyridoxal phosphate)lysine).

This sequence belongs to the SHMT family. As to quaternary structure, homodimer. Requires pyridoxal 5'-phosphate as cofactor.

It localises to the cytoplasm. It catalyses the reaction (6R)-5,10-methylene-5,6,7,8-tetrahydrofolate + glycine + H2O = (6S)-5,6,7,8-tetrahydrofolate + L-serine. The protein operates within one-carbon metabolism; tetrahydrofolate interconversion. It participates in amino-acid biosynthesis; glycine biosynthesis; glycine from L-serine: step 1/1. Catalyzes the reversible interconversion of serine and glycine with tetrahydrofolate (THF) serving as the one-carbon carrier. This reaction serves as the major source of one-carbon groups required for the biosynthesis of purines, thymidylate, methionine, and other important biomolecules. Also exhibits THF-independent aldolase activity toward beta-hydroxyamino acids, producing glycine and aldehydes, via a retro-aldol mechanism. This chain is Serine hydroxymethyltransferase, found in Mycoplasmopsis agalactiae (strain NCTC 10123 / CIP 59.7 / PG2) (Mycoplasma agalactiae).